We begin with the raw amino-acid sequence, 253 residues long: 2-C-methyl-D-erythritol 4-phosphate cytidylyltransferase (253 aa).

The segment at 1–28 (MSVSSRPGRRRFALIPSAGTGTRAGGDL) is disordered.

The protein belongs to the IspD/TarI cytidylyltransferase family. IspD subfamily.

The catalysed reaction is 2-C-methyl-D-erythritol 4-phosphate + CTP + H(+) = 4-CDP-2-C-methyl-D-erythritol + diphosphate. The protein operates within isoprenoid biosynthesis; isopentenyl diphosphate biosynthesis via DXP pathway; isopentenyl diphosphate from 1-deoxy-D-xylulose 5-phosphate: step 2/6. Functionally, catalyzes the formation of 4-diphosphocytidyl-2-C-methyl-D-erythritol from CTP and 2-C-methyl-D-erythritol 4-phosphate (MEP). The polypeptide is 2-C-methyl-D-erythritol 4-phosphate cytidylyltransferase (Ralstonia nicotianae (strain ATCC BAA-1114 / GMI1000) (Ralstonia solanacearum)).